Reading from the N-terminus, the 325-residue chain is Neisseria adhesin A (325 aa).

Residues 1 to 23 (MKHFQSKVLTAAILAALSGSAMA) form the signal peptide. Residues 24–137 (DNPPPSTDEI…NTAAIGENKA (114 aa)) are head domain. Residues 86–135 (LKEVLAQHDQSLADLTGTVDENSEALVKTAEVVNDISADVKANTAAIGEN) are a coiled coil. The interval 139 to 231 (IAKKADQTAL…LASAEKSITE (93 aa)) is coiled stalk domain. The interval 232–270 (HGTRLNGLDRTVSDLRKETRQGLAEQAALSGLFQPYNVG) is outer membrane translocation of the passenger domain. 4 beta stranded membrane passes run 270-280 (GRFNVTAAVGG), 284-295 (ESAVAIGTGFRF), 302-308 (KAGVAVG), and 314-325 (SAAYHVGVNYEW). The translocator domain stretch occupies residues 271 to 325 (RFNVTAAVGGYKSESAVAIGTGFRFTENFAAKAGVAVGTSSGSSAAYHVGVNYEW).

Belongs to the autotransporter-2 (AT-2) (TC 1.B.40) family. Homotrimer.

It is found in the cell surface. The protein localises to the cell outer membrane. In terms of biological role, an antigenic bacterial cell surface protein that adheres to and induces bacterial uptake by human epithelial cells. In Neisseria meningitidis serogroup B, this protein is Neisseria adhesin A.